A 185-amino-acid chain; its full sequence is Peptidyl-tRNA hydrolase (185 aa).

A tRNA-binding site is contributed by tyrosine 14. Histidine 19 acts as the Proton acceptor in catalysis. 3 residues coordinate tRNA: phenylalanine 64, asparagine 66, and asparagine 112.

The protein belongs to the PTH family. As to quaternary structure, monomer.

Its subcellular location is the cytoplasm. It catalyses the reaction an N-acyl-L-alpha-aminoacyl-tRNA + H2O = an N-acyl-L-amino acid + a tRNA + H(+). Functionally, hydrolyzes ribosome-free peptidyl-tRNAs (with 1 or more amino acids incorporated), which drop off the ribosome during protein synthesis, or as a result of ribosome stalling. Its function is as follows. Catalyzes the release of premature peptidyl moieties from peptidyl-tRNA molecules trapped in stalled 50S ribosomal subunits, and thus maintains levels of free tRNAs and 50S ribosomes. In Lacticaseibacillus casei (strain BL23) (Lactobacillus casei), this protein is Peptidyl-tRNA hydrolase.